Reading from the N-terminus, the 140-residue chain is Mercuric transport protein MerC (140 aa).

Residues 2 to 10 (GLMTRIADK) are Cytoplasmic-facing. A helical membrane pass occupies residues 11-31 (TGALGSVVSAMGCAACFPALA). The Hg(2+) site is built by Gly-22 and Ala-25. The Periplasmic segment spans residues 32–46 (SFGAAIGLGFLSQYE). The helical transmembrane segment at 47 to 67 (GLFISRLLPLFAALAFLANAL) threads the bilayer. The Cytoplasmic segment spans residues 68 to 78 (GWFSHRQWLRS). Residues 79-99 (LLGMIGPAIVFAATVWLLGNW) form a helical membrane-spanning segment. Residues 100–106 (WTANLMY) are Periplasmic-facing. The chain crosses the membrane as a helical span at residues 107–127 (VGLALMIGVSIWDFVSPAHRR). At 128–140 (CGPDGCELPAKRL) the chain is on the cytoplasmic side.

It is found in the cell inner membrane. Its activity is regulated as follows. Uptake of Hg(2+) is decreased by iodoacetamide and iodoacetate, and is completely inhibited by the thiol-modifying reagent N-ethylmaleimide (NEM). Its function is as follows. Involved in mercuric ion uptake and binding. MerC-mediated Hg(2+) uptake does not require MerP. The protein is Mercuric transport protein MerC of Shigella flexneri.